The sequence spans 409 residues: Multidrug efflux pump Tap (409 aa).

12 consecutive transmembrane segments (helical) span residues 10–30, 46–66, 80–98, 104–123, 144–168, 174–193, 218–240, 260–282, 289–308, 313–335, 348–370, and 375–397; these read LLIL…IVAF, IVAM…GAAV, LLSA…IFGV, AVLA…GMTA, SVYE…IATL, MWVT…VLRL, FVWY…GLYM, LGWV…AVMS, ATML…IAFL, LILV…YNYV, VVGV…AGPL, and GLHA…AVFL.

Belongs to the major facilitator superfamily. Drug:H(+) antiporter-3 (DHA3) (TC 2.A.1.21) family.

It localises to the cell inner membrane. Its activity is regulated as follows. Efflux activity is inhibited by carbonyl cyanide m-chlorophenylhydrazone (CCCP) and reserpine, but not by o-vanadate or chlorpromazine (CPZ). In terms of biological role, efflux pump that contributes to intrinsic antibiotic resistance. The pump uses the electrochemical gradient as a source of energy. Confers low-level resistance to tetracycline and to several aminoglycosides, including streptomycin, gentamicin, 2'-N-ethylnetilmicin and 6'-N-ethylnetilmicin. The polypeptide is Multidrug efflux pump Tap (Mycolicibacterium fortuitum (Mycobacterium fortuitum)).